A 237-amino-acid polypeptide reads, in one-letter code: Cysteine-rich venom protein DIS2 (237 aa).

A signal peptide spans 1–18; it reads MFVFILLSLAAVLQQSFG. The SCP domain occupies 37–165; sequence VDKHNAFRRS…SYNYFYVCQY (129 aa). Intrachain disulfides connect C74-C152, C91-C166, C147-C163, C185-C192, C188-C197, C201-C234, and C219-C232. Positions 201–234 constitute a ShKT domain; it reads CSREDVFMNCKSLVAQSNCQDDYIRKNCPATCFC.

This sequence belongs to the CRISP family. As to expression, expressed by the venom gland.

It localises to the secreted. In terms of biological role, weakly blocks contraction of smooth muscle elicited by high potassium-induced depolarization, but does not block caffeine-stimulated contraction. May target voltage-gated calcium channels on smooth muscle. The sequence is that of Cysteine-rich venom protein DIS2 from Dispholidus typus (Boomslang).